A 158-amino-acid chain; its full sequence is Cyclic pyranopterin monophosphate synthase (158 aa).

Residues 76–78 (MCH) and 114–115 (ME) contribute to the substrate site. Asp-129 is a catalytic residue.

The protein belongs to the MoaC family. Homohexamer; trimer of dimers.

It catalyses the reaction (8S)-3',8-cyclo-7,8-dihydroguanosine 5'-triphosphate = cyclic pyranopterin phosphate + diphosphate. It functions in the pathway cofactor biosynthesis; molybdopterin biosynthesis. In terms of biological role, catalyzes the conversion of (8S)-3',8-cyclo-7,8-dihydroguanosine 5'-triphosphate to cyclic pyranopterin monophosphate (cPMP). This is Cyclic pyranopterin monophosphate synthase from Clostridium perfringens (strain SM101 / Type A).